Consider the following 930-residue polypeptide: MKLKDTLNLGKTEFPMRAGLPTKEPVWQKEWEDAKLYQRRQELNQGKPHFTLHDGPPYANGNIHVGHAMNKISKDIIVRSKSMSGFYAPFIPGWDTHGLPIEQVLSKQGVKRKEMDLVEYLKLCREYALSQVDKQREDFKRLGVSGDWENPYVTLTPDYEAAQIRVFGEMANKGYIYRGAKPVYWSWSSESALAEAEIEYHDLVSTSLYYANKVKDGKGVLDTDTYIVVWTTTPFTITASRGLTVGADIDYVLVQPAGEARKFVVAAELLTSLSEKFGWADVQVLETYRGQELNHIVTEHPWDTAVEELVILGDHVTTDSGTGIVHTAPGFGEDDYNVGIANNLEVAVTVDERGIMMKNAGPEFEGQFYEKVVPTVIEKLGNLLLAQEEISHSYPFDWRTKKPIIWRAVPQWFASVSKFRQEILDEIEKVKFHSEWGKVRLYNMIRDRGDWVISRQRAWGVPLPIFYAEDGTAIMVAETIEHVAQLFEEHGSSIWWERDAKDLLPEGFTHPGSPNGEFKKETDIMDVWFDSGSSWNGVVVNRPELTYPADLYLEGSDQYRGWFNSSLITSVANHGVAPYKQILSQGFALDGKGEKMSKSLGNTIAPSDVEKQFGAEILRLWVTSVDSSNDVRISMDILSQVSETYRKIRNTLRFLIANTSDFNPAQDTVAYDELRSVDKYMTIRFNQLVKTIRDAYADFEFLTIYKALVNFINVDLSAFYLDFAKDVVYIEGAKSLERRQMQTVFYDILVKITKLLTPILPHTAEEIWSYLEFEAEDFVQLSELPEAQTSANQEEILDTWAAFMDFRGQAQKALEEARNAKVIGKSLEAHLTVYPNEVVKTLLEAVNSNVAQLLIVSELTIAEEPTPEAALSFEDVAFTVERAAGEVCDRCRRIDPTTAERSYQAVICDHCASIVEENFADAVAEGFEEK.

The short motif at 57 to 67 (PYANGNIHVGH) is the 'HIGH' region element. L-isoleucyl-5'-AMP is bound at residue Glu-554. Residues 595-599 (KMSKS) carry the 'KMSKS' region motif. ATP is bound at residue Lys-598. Cys-888, Cys-891, Cys-908, and Cys-911 together coordinate Zn(2+).

It belongs to the class-I aminoacyl-tRNA synthetase family. IleS type 1 subfamily. Monomer. Requires Zn(2+) as cofactor.

It localises to the cytoplasm. It catalyses the reaction tRNA(Ile) + L-isoleucine + ATP = L-isoleucyl-tRNA(Ile) + AMP + diphosphate. Its function is as follows. Catalyzes the attachment of isoleucine to tRNA(Ile). As IleRS can inadvertently accommodate and process structurally similar amino acids such as valine, to avoid such errors it has two additional distinct tRNA(Ile)-dependent editing activities. One activity is designated as 'pretransfer' editing and involves the hydrolysis of activated Val-AMP. The other activity is designated 'posttransfer' editing and involves deacylation of mischarged Val-tRNA(Ile). This is Isoleucine--tRNA ligase from Streptococcus pneumoniae (strain Taiwan19F-14).